The primary structure comprises 325 residues: uncharacterized protein (325 aa).

This is an uncharacterized protein from Escherichia coli (Bacteriophage T4).